The primary structure comprises 716 residues: MDANLRKTLDELPAEPGCYLMKDRRGAVVYVGKASSLRSRVRSYFDASRGDDRAFVALLDELLGDVEVIVTRSEKEAVLLENELIKRHRPRFNIRLRDDKDFIVLRLDERHAFPRLEVRRAREPRRAGARYFGPYSSASSIRETLRVVNRHFQLRTCTDHVFEHRKRPCILYQIKRCPAPCVYDVPEAEYRQSVEDAIEFLEGRETELVERLHGRMDEAADALRFEDAARLRDQLQAVERSLEKQRVLMADRADRDVVGLYREGPDLVVQVLAMRAGKLQDSRSYPFHEQEFPDEETLSSFLSLYYEQNAAPEEILVPVEPAEVDALADVLSERRGRRVRLLTPQRGAKADLLEVAARNAEQGFRSWHEKDERREQALAALTRALHLARPPRWMECYDISTFQGALAVGSGVSFRDGEPDKACYRRYKVKGVAGQDDFAMLYEVVSRRLRRALGEGAFPDLLVIDGGKGQLNAALAAAKDLGVPTKPSPGNEGAPFVELVGLAKSRLVDAPALGTTRVIGRRGRGGGASRAASGAAALADAAEAQEHGFVSELARSPERVFLPGRKDPVVLRQNSAELFLLARLRDEAHRFAITFHRKLRRERNFQSVLEEISGIGEGRKRALLRHFGALRRVKEATLDEISQVDGFGPKQARAVFEFFHPPRREGAEGAAVVGPPSAAAAPPIETAAVAEAVSEEDIDAALAAEDEDAEGPAPVE.

One can recognise a GIY-YIG domain in the interval 14 to 94; that stretch reads AEPGCYLMKD…IKRHRPRFNI (81 aa). A UVR domain is found at 206–241; that stretch reads TELVERLHGRMDEAADALRFEDAARLRDQLQAVERS.

This sequence belongs to the UvrC family. Interacts with UvrB in an incision complex.

It is found in the cytoplasm. The UvrABC repair system catalyzes the recognition and processing of DNA lesions. UvrC both incises the 5' and 3' sides of the lesion. The N-terminal half is responsible for the 3' incision and the C-terminal half is responsible for the 5' incision. The chain is UvrABC system protein C from Anaeromyxobacter sp. (strain Fw109-5).